Reading from the N-terminus, the 282-residue chain is Putative hydrolase Bmul_3283/BMULJ_05242 (282 aa).

Mg(2+) is bound by residues Glu-124, Glu-126, and Asp-155.

The protein belongs to the FAH family. It depends on Mg(2+) as a cofactor.

The protein is Putative hydrolase Bmul_3283/BMULJ_05242 of Burkholderia multivorans (strain ATCC 17616 / 249).